We begin with the raw amino-acid sequence, 393 residues long: DNA polymerase processivity factor (393 aa).

Disordered stretches follow at residues 25–50 (EMERGSRDHHRDHRDHREHRETREPP), 311–339 (ESRFERMGKQDDGKGDRSHKNDDGSALAS), and 355–393 (KNGTAGSSLFNEKEDSESDDSMHFDYSSNPNPKRQRCVV). A compositionally biased stretch (basic residues) spans 31–41 (RDHHRDHRDHR). Residues 311–333 (ESRFERMGKQDDGKGDRSHKNDD) are compositionally biased toward basic and acidic residues.

The protein belongs to the herpesviridae polymerase accessory protein family.

Its function is as follows. Accessory subunit of the DNA polymerase that acts to increase the processivity of polymerization. In Human herpesvirus 6A (strain Uganda-1102) (HHV-6 variant A), this protein is DNA polymerase processivity factor (U27).